Here is a 162-residue protein sequence, read N- to C-terminus: Cytochrome c-type biogenesis protein CcmE (162 aa).

Over 1-8 (MNPVRKKR) the chain is Cytoplasmic. A helical; Signal-anchor for type II membrane protein membrane pass occupies residues 9 to 29 (LIIVLAIVAGVGAAVGLALSA). The Periplasmic portion of the chain corresponds to 30 to 162 (LQQNINLFYT…GETSYNQEGK (133 aa)). Heme-binding residues include His-124 and Tyr-128. Basic and acidic residues predominate over residues 139 to 148 (DSGQLKHYEN). Residues 139 to 162 (DSGQLKHYENGKAAGETSYNQEGK) are disordered.

This sequence belongs to the CcmE/CycJ family.

The protein resides in the cell inner membrane. Functionally, heme chaperone required for the biogenesis of c-type cytochromes. Transiently binds heme delivered by CcmC and transfers the heme to apo-cytochromes in a process facilitated by CcmF and CcmH. The sequence is that of Cytochrome c-type biogenesis protein CcmE from Pseudomonas aeruginosa (strain ATCC 15692 / DSM 22644 / CIP 104116 / JCM 14847 / LMG 12228 / 1C / PRS 101 / PAO1).